The chain runs to 166 residues: Regulator of ribonuclease activity A (166 aa).

This sequence belongs to the RraA family. Homotrimer. Binds to both RNA-binding sites in the C-terminal region of Rne and to RhlB.

The protein localises to the cytoplasm. Globally modulates RNA abundance by binding to RNase E (Rne) and regulating its endonucleolytic activity. Can modulate Rne action in a substrate-dependent manner by altering the composition of the degradosome. Modulates RNA-binding and helicase activities of the degradosome. This Mannheimia succiniciproducens (strain KCTC 0769BP / MBEL55E) protein is Regulator of ribonuclease activity A.